Here is a 501-residue protein sequence, read N- to C-terminus: Ribose import ATP-binding protein RbsA (501 aa).

ABC transporter domains are found at residues 5–241 and 252–495; these read LQLK…VGRK and APGD…VGKL. 37–44 contacts ATP; the sequence is GENGAGKS.

This sequence belongs to the ABC transporter superfamily. Ribose importer (TC 3.A.1.2.1) family. In terms of assembly, the complex is composed of an ATP-binding protein (RbsA), two transmembrane proteins (RbsC) and a solute-binding protein (RbsB).

The protein resides in the cell inner membrane. The catalysed reaction is D-ribose(out) + ATP + H2O = D-ribose(in) + ADP + phosphate + H(+). Part of the ABC transporter complex RbsABC involved in ribose import. Responsible for energy coupling to the transport system. This is Ribose import ATP-binding protein RbsA from Escherichia coli (strain K12).